Here is a 696-residue protein sequence, read N- to C-terminus: Elongation factor G (696 aa).

Residues 8–288 enclose the tr-type G domain; the sequence is EDYRNFGIMA…AVVDFLPSPI (281 aa). GTP contacts are provided by residues 17–24, 86–90, and 140–143; these read AHIDAGKT, DTPGH, and NKMD.

The protein belongs to the TRAFAC class translation factor GTPase superfamily. Classic translation factor GTPase family. EF-G/EF-2 subfamily.

Its subcellular location is the cytoplasm. Catalyzes the GTP-dependent ribosomal translocation step during translation elongation. During this step, the ribosome changes from the pre-translocational (PRE) to the post-translocational (POST) state as the newly formed A-site-bound peptidyl-tRNA and P-site-bound deacylated tRNA move to the P and E sites, respectively. Catalyzes the coordinated movement of the two tRNA molecules, the mRNA and conformational changes in the ribosome. In Chelativorans sp. (strain BNC1), this protein is Elongation factor G.